We begin with the raw amino-acid sequence, 819 residues long: Ferric-pyoverdine 358 receptor (819 aa).

The N-terminal stretch at 1–47 (MSKPLPSALNPLAKALLIRHSLRPRHALSRIGMGLALSSALVFQVQA) is a signal peptide. The TonB box signature appears at 115-122 (NTVTVTAS). The 111-residue stretch at 166 to 276 (SIRETPQTIT…PSAVVNVIRK (111 aa)) folds into the TBDR plug domain. A TBDR beta-barrel domain is found at 281 to 819 (EFKSHIQAGV…NATVTLRYDF (539 aa)). Positions 802–819 (YGHYGAPRNATVTLRYDF) match the TonB C-terminal box motif.

Belongs to the TonB-dependent receptor family.

Its subcellular location is the cell outer membrane. Functionally, specific receptor for the siderophore ferric pyoverdine (pseudobactin) 358. This chain is Ferric-pyoverdine 358 receptor (pupA), found in Pseudomonas putida (Arthrobacter siderocapsulatus).